A 146-amino-acid chain; its full sequence is Snaclec stejaggregin-B subunit beta-2 (146 aa).

Residues 1–23 form the signal peptide; sequence MGRFIFVSFGLLVVFLSLSGSGA. The C-type lectin domain occupies 32–143; the sequence is YDLYCYRVFQ…CSQTYPFVCK (112 aa). 2 cysteine pairs are disulfide-bonded: Cys53-Cys142 and Cys119-Cys134.

The protein belongs to the snaclec family. In terms of assembly, heteromultimer; disulfide-linked. In terms of tissue distribution, expressed by the venom gland.

Its subcellular location is the secreted. Its function is as follows. Interferes with one step of hemostasis (modulation of platelet aggregation, or coagulation cascade, for example). This Trimeresurus stejnegeri (Chinese green tree viper) protein is Snaclec stejaggregin-B subunit beta-2.